The sequence spans 442 residues: Septin-8 (442 aa).

Residues Met1–Pro16 show a composition bias toward basic and acidic residues. Residues Met1–Gly23 form a disordered region. The residue at position 2 (Ala2) is an N-acetylalanine. The residue at position 10 (Ser10) is a Phosphoserine. The region spanning Gln41–Glu307 is the Septin-type G domain. Positions Gly51–Ser58 are G1 motif. GTP-binding positions include Gly51–Ser58, Gly106, Lys187–Glu195, Gly241, and Arg256. Positions Asp103–Gly106 are G3 motif. The segment at Ala186–Asp189 is G4 motif. Positions Leu322–Ser410 form a coiled coil. Residues His377 to Leu391 are compositionally biased toward basic and acidic residues. Positions His377–Pro442 are disordered. Polar residues-rich tracts occupy residues Leu408–Pro420 and Gly432–Pro442.

It belongs to the TRAFAC class TrmE-Era-EngA-EngB-Septin-like GTPase superfamily. Septin GTPase family. In terms of assembly, septins polymerize into heterooligomeric protein complexes that form filaments, and can associate with cellular membranes, actin filaments and microtubules. GTPase activity is required for filament formation. Interacts with CDK14, SEPTIN4, SEPTIN5 and SEPTIN7. Interacts with VAMP2; the interaction inhibits interaction of VAMP2 with SYP. Interacts with STX1A.

It is found in the cytoplasm. The protein resides in the cytoskeleton. Its subcellular location is the synapse. The protein localises to the cell projection. It localises to the axon. It is found in the cytoplasmic vesicle. The protein resides in the secretory vesicle. Its subcellular location is the synaptic vesicle membrane. The protein localises to the presynapse. Functionally, filament-forming cytoskeletal GTPase. May play a role in platelet secretion. Seems to participate in the process of SNARE complex formation in synaptic vesicles. This chain is Septin-8, found in Otolemur garnettii (Small-eared galago).